Reading from the N-terminus, the 80-residue chain is Conotoxin SIVB (80 aa).

An N-terminal signal peptide occupies residues 1–21; it reads MGMRMMFTVFLSVVLATTVVS. Residues 22–38 constitute a propeptide that is removed on maturation; that stretch reads TPSDRASDGRNAAVHER. At Gln39 the chain carries Pyrrolidone carboxylic acid. Ser45 is a glycosylation site (O-linked (HexNAc...) serine). A 4-hydroxyproline mark is found at Pro55, Pro60, Pro61, Pro69, Pro72, and Pro75. Proline amide is present on Pro75. Residues 76–80 constitute a propeptide that is removed on maturation; sequence GRRND.

The protein belongs to the conotoxin A superfamily. Contains 3 disulfide bonds. Post-translationally, O-linked glycan consists of Hex3-HexNAc2 pentasaccharide. Expressed by the venom duct.

The protein localises to the secreted. In terms of biological role, neurotoxin with probable activity on sodium channel. Induces intense repetitive firing of the frog neuromuscular junction, leading to a tetanic contracture in muscle fiber (spastic paralysis). In vivo, shows the same effect as the whole venom when injected on fish prey. The chain is Conotoxin SIVB from Conus striatus (Striated cone).